Reading from the N-terminus, the 824-residue chain is Fibroblast growth factor receptor 2 (824 aa).

The N-terminal stretch at 1 to 21 is a signal peptide; it reads MFSWSYLMGLVMVATATLSLA. The Extracellular segment spans residues 22–374; that stretch reads RPSYNIAEDT…LDSSSSEYTE (353 aa). The Ig-like C2-type 1 domain maps to 25 to 125; that stretch reads YNIAEDTTLE…ETRYFIVNIT (101 aa). A disulfide bridge links Cys-62 with Cys-107. 3 N-linked (GlcNAc...) asparagine glycosylation sites follow: Asn-83, Asn-123, and Asn-128. Residues 125–152 form a disordered region; sequence TDGNSSGDDEDDNDGSEDFTNDNNHKRA. The segment covering 131-144 has biased composition (acidic residues); that stretch reads GDDEDDNDGSEDFT. 2 Ig-like C2-type domains span residues 153–246 and 254–356; these read PYWT…YHLD and PPIL…AWLT. The interval 160–177 is heparin-binding; sequence KLEKKLHAVPAANTVKFR. An intrachain disulfide couples Cys-178 to Cys-230. N-linked (GlcNAc...) asparagine glycans are attached at residues Asn-227, Asn-240, Asn-264, Asn-295, Asn-316, and Asn-329. Cys-277 and Cys-340 form a disulfide bridge. Residues 375 to 395 form a helical membrane-spanning segment; sequence IAIYCVGGFLIACMIGTIMMC. The Cytoplasmic segment spans residues 396–824; that stretch reads HMKGRGKKSD…PLKHEATQPA (429 aa). Tyr-463 carries the post-translational modification Phosphotyrosine; by autocatalysis. In terms of domain architecture, Protein kinase spans 478–767; sequence LTLGKPLGEG…LTQTTNEEYL (290 aa). ATP contacts are provided by residues 484 to 492, Lys-514, 562 to 564, and Asn-568; these read LGEGCFGQV and EYA. Tyr-583 bears the Phosphotyrosine; by autocatalysis mark. Residue Asp-623 is the Proton acceptor of the active site. Phosphotyrosine; by autocatalysis occurs at positions 653, 654, and 766. The interval 801–824 is disordered; that stretch reads SMNLAFPNPNTQMAPLKHEATQPA.

Belongs to the protein kinase superfamily. Tyr protein kinase family. Fibroblast growth factor receptor subfamily. In terms of assembly, monomer. Homodimer after ligand binding. In terms of processing, autophosphorylated. Binding of FGF family members together with heparan sulfate proteoglycan or heparin promotes receptor dimerization and autophosphorylation on tyrosine residues. Autophosphorylation occurs in trans between the two FGFR molecules present in the dimer. N-glycosylated in the endoplasmic reticulum. The N-glycan chains undergo further maturation to an Endo H-resistant form in the Golgi apparatus. Post-translationally, ubiquitinated. FGFR2 is rapidly ubiquitinated after autophosphorylation, leading to internalization and degradation. Subject to degradation both in lysosomes and by the proteasome.

The protein resides in the cell membrane. The protein localises to the golgi apparatus. Its subcellular location is the cytoplasmic vesicle. The enzyme catalyses L-tyrosyl-[protein] + ATP = O-phospho-L-tyrosyl-[protein] + ADP + H(+). With respect to regulation, present in an inactive conformation in the absence of bound ligand. Ligand binding leads to dimerization and activation by autophosphorylation on tyrosine residues. Tyrosine-protein kinase that acts as a cell-surface receptor for fibroblast growth factors and plays an essential role in the regulation of cell proliferation, differentiation, migration and apoptosis, and in the regulation of embryonic development. Required for normal embryonic patterning, limb bud development, lung morphogenesis, osteogenesis and skin development. Plays an essential role in the regulation of osteoblast differentiation, proliferation and apoptosis, and is required for normal skeleton development. Promotes cell proliferation in keratinocytes and immature osteoblasts, but promotes apoptosis in differentiated osteoblasts. Phosphorylates PLCG1, FRS2 and PAK4. Ligand binding leads to the activation of several signaling cascades. Activation of PLCG1 leads to the production of the cellular signaling molecules diacylglycerol and inositol 1,4,5-trisphosphate. Phosphorylation of FRS2 triggers recruitment of GRB2, GAB1, PIK3R1 and SOS1, and mediates activation of RAS, MAPK1/ERK2, MAPK3/ERK1 and the MAP kinase signaling pathway, as well as of the AKT1 signaling pathway. FGFR2 signaling is down-regulated by ubiquitination, internalization and degradation. Mutations that lead to constitutive kinase activation or impair normal FGFR2 maturation, internalization and degradation lead to aberrant signaling. Over-expressed FGFR2 promotes activation of STAT1. The chain is Fibroblast growth factor receptor 2 (FGFR2) from Pleurodeles waltl (Iberian ribbed newt).